The sequence spans 27 residues: Potassium channel toxin alpha-KTx 9.11 (27 aa).

3 disulfide bridges follow: cysteine 3–cysteine 19, cysteine 6–cysteine 23, and cysteine 10–cysteine 25.

The protein belongs to the short scorpion toxin superfamily. Potassium channel inhibitor family. Alpha-KTx 09 subfamily. As to expression, expressed by the venom gland.

The protein resides in the secreted. May play a role in blocking voltage-gated potassium channels Kv1.2/KCNA2, Kv1.3/KCNA3 and Kv1.6/KCNA6 to a lesser extent. The protein is Potassium channel toxin alpha-KTx 9.11 of Mesobuthus gibbosus (Mediterranean checkered scorpion).